The following is a 207-amino-acid chain: Thiamine-phosphate synthase (207 aa).

Residues 38 to 42 (QYRNK) and Asn70 contribute to the 4-amino-2-methyl-5-(diphosphooxymethyl)pyrimidine site. Asp71 and Asp90 together coordinate Mg(2+). Ser109 serves as a coordination point for 4-amino-2-methyl-5-(diphosphooxymethyl)pyrimidine. 136–138 (TAT) contacts 2-[(2R,5Z)-2-carboxy-4-methylthiazol-5(2H)-ylidene]ethyl phosphate. Lys139 serves as a coordination point for 4-amino-2-methyl-5-(diphosphooxymethyl)pyrimidine. Residues Gly165 and 185 to 186 (VS) contribute to the 2-[(2R,5Z)-2-carboxy-4-methylthiazol-5(2H)-ylidene]ethyl phosphate site.

Belongs to the thiamine-phosphate synthase family. Mg(2+) serves as cofactor.

The catalysed reaction is 2-[(2R,5Z)-2-carboxy-4-methylthiazol-5(2H)-ylidene]ethyl phosphate + 4-amino-2-methyl-5-(diphosphooxymethyl)pyrimidine + 2 H(+) = thiamine phosphate + CO2 + diphosphate. The enzyme catalyses 2-(2-carboxy-4-methylthiazol-5-yl)ethyl phosphate + 4-amino-2-methyl-5-(diphosphooxymethyl)pyrimidine + 2 H(+) = thiamine phosphate + CO2 + diphosphate. It carries out the reaction 4-methyl-5-(2-phosphooxyethyl)-thiazole + 4-amino-2-methyl-5-(diphosphooxymethyl)pyrimidine + H(+) = thiamine phosphate + diphosphate. It participates in cofactor biosynthesis; thiamine diphosphate biosynthesis; thiamine phosphate from 4-amino-2-methyl-5-diphosphomethylpyrimidine and 4-methyl-5-(2-phosphoethyl)-thiazole: step 1/1. Condenses 4-methyl-5-(beta-hydroxyethyl)thiazole monophosphate (THZ-P) and 2-methyl-4-amino-5-hydroxymethyl pyrimidine pyrophosphate (HMP-PP) to form thiamine monophosphate (TMP). The protein is Thiamine-phosphate synthase of Xanthomonas campestris pv. campestris (strain 8004).